The primary structure comprises 316 residues: Ornithine carbamoyltransferase (316 aa).

Carbamoyl phosphate-binding positions include 57-60 (STRT), Q84, R108, and 135-138 (HPCQ). L-ornithine is bound by residues N166, D230, and 234 to 235 (SM). Residues 269–270 (CL) and R297 contribute to the carbamoyl phosphate site.

The protein belongs to the aspartate/ornithine carbamoyltransferase superfamily. OTCase family.

It is found in the cytoplasm. The catalysed reaction is carbamoyl phosphate + L-ornithine = L-citrulline + phosphate + H(+). It functions in the pathway amino-acid degradation; L-arginine degradation via ADI pathway; carbamoyl phosphate from L-arginine: step 2/2. Reversibly catalyzes the transfer of the carbamoyl group from carbamoyl phosphate (CP) to the N(epsilon) atom of ornithine (ORN) to produce L-citrulline. This chain is Ornithine carbamoyltransferase, found in Bacillus cereus (strain 03BB102).